The sequence spans 621 residues: Na(+)/H(+) antiporter NhaA (621 aa).

Positions 1–430 are na(+)/H(+) antiporter NhaA; sequence MPASSFGESS…LGWLIFKVAA (430 aa). Helical transmembrane passes span 27-47, 72-92, 109-129, 139-159, 168-188, 192-212, 223-243, 300-320, 339-359, 375-395, and 409-429; these read GAAV…NSPL, LHHW…GLEV, LALI…VLIV, GWGA…AIVG, VFLL…IGIV, EIRI…WLLG, VLIV…ASLA, FLRL…NAGV, VIAG…LVAV, VFGG…IIGL, and VGVL…FKVA. Positions 431 to 578 constitute a Thioredoxin domain; the sequence is QRWGEKTADL…VERDLASAVA (148 aa).

In the N-terminal section; belongs to the NhaA Na(+)/H(+) (TC 2.A.33) antiporter family.

It is found in the cell inner membrane. It catalyses the reaction Na(+)(in) + 2 H(+)(out) = Na(+)(out) + 2 H(+)(in). Functionally, na(+)/H(+) antiporter that extrudes sodium in exchange for external protons. The sequence is that of Na(+)/H(+) antiporter NhaA from Herminiimonas arsenicoxydans.